A 186-amino-acid chain; its full sequence is dITP/XTP pyrophosphatase (186 aa).

7 to 12 (TSNPGK) contacts substrate. The Mg(2+) site is built by Glu36 and Asp65. The Proton acceptor role is filled by Asp65. Substrate is bound by residues Ser66, 140 to 143 (FGYD), Lys163, and 168 to 169 (HR).

The protein belongs to the HAM1 NTPase family. As to quaternary structure, homodimer. Requires Mg(2+) as cofactor. The cofactor is Mn(2+).

It carries out the reaction XTP + H2O = XMP + diphosphate + H(+). The catalysed reaction is dITP + H2O = dIMP + diphosphate + H(+). It catalyses the reaction ITP + H2O = IMP + diphosphate + H(+). Pyrophosphatase that catalyzes the hydrolysis of nucleoside triphosphates to their monophosphate derivatives, with a high preference for the non-canonical purine nucleotides XTP (xanthosine triphosphate), dITP (deoxyinosine triphosphate) and ITP. Seems to function as a house-cleaning enzyme that removes non-canonical purine nucleotides from the nucleotide pool, thus preventing their incorporation into DNA/RNA and avoiding chromosomal lesions. This is dITP/XTP pyrophosphatase from Pyrococcus horikoshii (strain ATCC 700860 / DSM 12428 / JCM 9974 / NBRC 100139 / OT-3).